We begin with the raw amino-acid sequence, 155 residues long: Cardio acceleratory peptide 2b (155 aa).

A signal peptide spans 1 to 26 (MKAIFSLYNIVSAILLLVLLAEFSTA). A propeptide spanning residues 27-33 (ELNHDKN) is cleaved from the precursor. Val-47 is subject to Valine amide. Positions 50–85 (SDPSLANSLRDASDAAVFDGLYGDASQEDYNEADYQ) are excised as a propeptide. Val-96 is subject to Valine amide. Positions 99–117 (SDAELRKFAHLLALQQVLD) are excised as a propeptide. Leucine amide is present on Leu-134. A propeptide spanning residues 138-155 (SVDAKAFSDASKGQQEFN) is cleaved from the precursor.

This sequence belongs to the pyrokinin family.

It is found in the secreted. Its function is as follows. CAP-1 and CAP-2, but not CAP-3 are ligands for the Capa receptor. CAP-1 and CAP-2 are probably components of the signal transduction pathway that leads to Malpighian tubule fluid secretion via the second messenger nitric oxide. The polypeptide is Cardio acceleratory peptide 2b (Drosophila pseudoobscura pseudoobscura (Fruit fly)).